Reading from the N-terminus, the 187-residue chain is Elongation factor P (187 aa).

Belongs to the elongation factor P family.

Its subcellular location is the cytoplasm. It participates in protein biosynthesis; polypeptide chain elongation. Its function is as follows. Involved in peptide bond synthesis. Stimulates efficient translation and peptide-bond synthesis on native or reconstituted 70S ribosomes in vitro. Probably functions indirectly by altering the affinity of the ribosome for aminoacyl-tRNA, thus increasing their reactivity as acceptors for peptidyl transferase. This chain is Elongation factor P, found in Corynebacterium kroppenstedtii (strain DSM 44385 / JCM 11950 / CIP 105744 / CCUG 35717).